A 52-amino-acid polypeptide reads, in one-letter code: Gene 5.9 protein (52 aa).

This is Gene 5.9 protein (5.9) from Enterobacteria phage T3 (Bacteriophage T3).